A 406-amino-acid polypeptide reads, in one-letter code: Putative phosphate permease TK2061 (406 aa).

A run of 10 helical transmembrane segments spans residues 2-22, 45-65, 82-102, 115-135, 139-159, 182-202, 208-228, 288-308, 324-346, and 385-405; these read AVMD…AWAI, AVLI…KSVT, TVLI…LVIA, IIGG…VNWG, QVVL…FLVF, FWIG…VLHG, GVLF…FLTL, VPVP…GVAT, LTNT…ASWL, and FVTV…LMIV.

Belongs to the inorganic phosphate transporter (PiT) (TC 2.A.20) family.

It localises to the cell membrane. Its function is as follows. Potential transporter for phosphate. This Thermococcus kodakarensis (strain ATCC BAA-918 / JCM 12380 / KOD1) (Pyrococcus kodakaraensis (strain KOD1)) protein is Putative phosphate permease TK2061.